The primary structure comprises 107 residues: uncharacterized protein (107 aa).

Residues 25–42 (LSLCSVLLSWLICAMCLW) traverse the membrane as a helical segment.

The protein localises to the host membrane. This is an uncharacterized protein from Galliformes (FAdV-1).